The following is a 549-amino-acid chain: Mitochondrial hydroperoxide bicyclase CYP50918A1 (549 aa).

Residues 1–75 (MPDAFDVSDD…PQGNRKPAVL (75 aa)) form a disordered region. Over residues 8–26 (SDDKQLVDQQLTRDSDSKP) the composition is skewed to basic and acidic residues. Positions 27-41 (AAKPASKQKPPSKVP) are enriched in low complexity. Residue cysteine 491 participates in heme binding. The interval 528–549 (DTGDHGPPNGKFSVIKPRQPKH) is disordered.

It belongs to the cytochrome P450 family. It depends on heme as a cofactor.

The protein localises to the mitochondrion. It catalyses the reaction (13S)-hydroperoxy-(9Z,11E,15Z)-octadecatrienoate = plasmodiophorol A. It carries out the reaction (13S)-hydroperoxy-(9Z,11E,15Z)-octadecatrienoate = plasmodiophorol B. Its pathway is lipid metabolism; oxylipin biosynthesis. Functionally, cytochrome P450 hydroperoxide bicyclase involved in the metabolism of oxylipins natural products such as egregiachlorides, hybridalactone, ecklonialactones and related bicyclic oxylipins. Isomerizes the hydroperoxides into epoxyalcohols via epoxyallylic radical. Can use alpha-linolenic 13-hydroperoxide ((9Z,11E,13S,15Z)-13-hydroperoxy-9,11,15-octadecatrienoic, 13-HPOT) as preferred substrate to produce the heterobicyclic oxylipins plasmodiophorol A (6-oxabicyclo[3.1.0]hexane) and plasmodiophorol B (2-oxabicyclo[2.2.1]heptane) at the ratio 12:1 and a minor product plasmodiophorol C (cyclopentanediol) formed through the hydrolysis of plasmodiophorols A and B and, to a lower extent, active with linoleic acid 13-hydroperoxide ((9Z,11E,13S)-13-hydroperoxy-9,11-octadecadienoic, 13-HPOD), linoleic acid 9-hydroperoxide ((9S,10E,12Z)-9-hydroperoxy-10,12-octadecadienoic, 9-HPOD) and alpha-linolenic 9-hydroperoxide ((9S,10E,12Z,15Z)-9-hydroperoxy-10,12,15-octadecatrienoic, 9-HPOT). In Plasmodiophora brassicae (Clubroot disease agent), this protein is Mitochondrial hydroperoxide bicyclase CYP50918A1.